A 1058-amino-acid chain; its full sequence is Translation initiation factor IF-2 (1058 aa).

Residues 1–12 (MNDTKTPGDKTL) show a composition bias toward basic and acidic residues. Residues 1 to 468 (MNDTKTPGDK…MTGHRGMQES (468 aa)) form a disordered region. Positions 54 to 81 (APGEAGAPSGTPAAAPAATPAPAAAAPR) are enriched in low complexity. Over residues 82–95 (PATPAPAAPRPAAP) the composition is skewed to pro residues. Over residues 96–108 (ATPAQPAAEAKAP) the composition is skewed to low complexity. A compositionally biased stretch (pro residues) spans 109 to 119 (APAPTPAPAAP). Composition is skewed to low complexity over residues 120–156 (AAPV…VEVP) and 164–228 (EPVA…QRPG). Residues 244–271 (RSGGPGSDRRGGPGGQNRPGQNRQGGSG) are compositionally biased toward gly residues. Positions 292–364 (ARVREVEERR…ARKRFGEETG (73 aa)) are enriched in basic and acidic residues. A compositionally biased stretch (low complexity) spans 368–396 (GASAPSTSTARPLTPRPAGTTTTTGAPAA). Over residues 452 to 461 (FRRRTQRMTG) the composition is skewed to basic residues. In terms of domain architecture, tr-type G spans 555–725 (PRPPVVTIMG…SLQSEVLDLK (171 aa)). A G1 region spans residues 564-571 (GHVDHGKT). 564 to 571 (GHVDHGKT) is a binding site for GTP. Residues 589-593 (GITQH) form a G2 region. Residues 611–614 (DTPG) are G3. Residues 611 to 615 (DTPGH) and 665 to 668 (NKID) each bind GTP. The interval 665–668 (NKID) is G4. The tract at residues 701–703 (SAT) is G5.

Belongs to the TRAFAC class translation factor GTPase superfamily. Classic translation factor GTPase family. IF-2 subfamily.

It is found in the cytoplasm. Its function is as follows. One of the essential components for the initiation of protein synthesis. Protects formylmethionyl-tRNA from spontaneous hydrolysis and promotes its binding to the 30S ribosomal subunits. Also involved in the hydrolysis of GTP during the formation of the 70S ribosomal complex. This Azorhizobium caulinodans (strain ATCC 43989 / DSM 5975 / JCM 20966 / LMG 6465 / NBRC 14845 / NCIMB 13405 / ORS 571) protein is Translation initiation factor IF-2.